A 396-amino-acid chain; its full sequence is Probable sugar efflux transporter (396 aa).

The Cytoplasmic segment spans residues 1–14 (MTTNTVSRKVAWLR). The chain crosses the membrane as a helical span at residues 15–35 (VVTLAVAAFIFNTTEFVPVGL). Topologically, residues 36-49 (LSDIAQSFHMQTAQ) are periplasmic. The chain crosses the membrane as a helical span at residues 50–70 (VGIMLTIYAWVVALMSLPFML). Residues 71–80 (MTSQVERRKL) lie on the Cytoplasmic side of the membrane. Residues 81–101 (LICLFVVFIASHVLSFLSWSF) form a helical membrane-spanning segment. Position 102 (Thr102) is a topological domain, periplasmic. Residues 103-123 (VLVISRIGVAFAHAIFWSITA) form a helical membrane-spanning segment. At 124-135 (SLAIRMAPAGKR) the chain is on the cytoplasmic side. Residues 136–156 (AQALSLIATGTALAMVLGLPL) form a helical membrane-spanning segment. Residues 157–169 (GRIVGQYFGWRMT) are Periplasmic-facing. The chain crosses the membrane as a helical span at residues 170–190 (FFAIGIGALVTLLCLIKLLPL). Residues 191-208 (LPSEHSGSLKSLPLLFRR) lie on the Cytoplasmic side of the membrane. The chain crosses the membrane as a helical span at residues 209–229 (PALMSIYLLTVVVVTAHYTAY). Over 230–245 (SYIEPFVQNIAGFSAN) the chain is Periplasmic. Residues 246–266 (FATALLLLLGGAGIIGSVIFG) traverse the membrane as a helical segment. Residues 267-274 (KLGNQYAS) are Cytoplasmic-facing. Residues 275 to 295 (ALVSTAIALLLVCLALLLPAA) form a helical membrane-spanning segment. Residues 296-298 (NSE) are Periplasmic-facing. Residues 299 to 319 (IHLGVLSIFWGIAMMIIGLGM) traverse the membrane as a helical segment. At 320–332 (QVKVLALAPDATD) the chain is on the cytoplasmic side. The chain crosses the membrane as a helical span at residues 333 to 353 (VAMALFSGIFNIGIGAGALVG). The Periplasmic segment spans residues 354-363 (NQVSLHWSMS). A helical membrane pass occupies residues 364–384 (MIGYVGAVPAFAALIWSIIIF). At 385 to 396 (RRWPVTLEEQTQ) the chain is on the cytoplasmic side.

Belongs to the major facilitator superfamily. SotB (TC 2.A.1.2) family.

The protein localises to the cell inner membrane. In terms of biological role, involved in the efflux of sugars. The physiological role may be the reduction of the intracellular concentration of toxic sugars or sugar metabolites. This is Probable sugar efflux transporter from Shigella flexneri.